Reading from the N-terminus, the 291-residue chain is Putative butyrophilin-like protein 10 pseudogene (291 aa).

The first 26 residues, 1 to 26, serve as a signal peptide directing secretion; that stretch reads MAVTCDPEAFLSICFVTLVFLQLPLA. An Ig-like V-type domain is found at 27-146; it reads SIWKADFDVT…GEATVQVQVA (120 aa). The Extracellular segment spans residues 27–254; sequence SIWKADFDVT…RSSQFTAWKA (228 aa). Cys54 and Cys128 form a disulfide bridge. A glycan (N-linked (GlcNAc...) asparagine) is linked at Asn59. The chain crosses the membrane as a helical span at residues 255 to 275; the sequence is ALPLILVAMGLVIAGGICIFW. At 276-291 the chain is on the cytoplasmic side; sequence KRQREKNKASLEEERE.

Belongs to the immunoglobulin superfamily. BTN/MOG family.

The protein resides in the membrane. This chain is Putative butyrophilin-like protein 10 pseudogene, found in Homo sapiens (Human).